Here is a 61-residue protein sequence, read N- to C-terminus: Opistoporin-4 (61 aa).

Residues 45–61 constitute a propeptide that is removed on maturation; it reads EAGQMPFDEFMDILHYY.

Belongs to the non-disulfide-bridged peptide (NDBP) superfamily. Long chain multifunctional peptide (group 2) family. As to expression, expressed by the venom gland.

It localises to the secreted. Its subcellular location is the target cell membrane. At high concentrations, acts as a pore former in cellular membranes and causes the leakage of the cells. At submicromolar concentrations, degranulates granulocytes and has a weak hemolytic activity against human erythrocytes. Also strongly inhibits the production of superoxide anions. Has a strong antibacterial activity against Gram-negative bacteria but is less active against Gram-positive bacteria. Also has antifungal activity. In Opistophthalmus carinatus (African yellow leg scorpion), this protein is Opistoporin-4.